The chain runs to 89 residues: uncharacterized protein (89 aa).

This is an uncharacterized protein from Dictyostelium discoideum (Social amoeba).